Reading from the N-terminus, the 199-residue chain is Interferon kappa (199 aa).

Positions 1 to 21 are cleaved as a signal peptide; that stretch reads MTPKFLWLVALVALYIPPIQS. Disulfide bonds link C24–C119 and C49–C162.

Belongs to the alpha/beta interferon family. Expressed at low levels in peritoneal macrophages.

The protein localises to the secreted. Its function is as follows. May play a role in the regulation of immune cell function. The protein is Interferon kappa (Ifnk) of Mus musculus (Mouse).